The following is a 312-amino-acid chain: Methionyl-tRNA formyltransferase (312 aa).

112 to 115 (SLLP) is a (6S)-5,6,7,8-tetrahydrofolate binding site.

This sequence belongs to the Fmt family.

The enzyme catalyses L-methionyl-tRNA(fMet) + (6R)-10-formyltetrahydrofolate = N-formyl-L-methionyl-tRNA(fMet) + (6S)-5,6,7,8-tetrahydrofolate + H(+). In terms of biological role, attaches a formyl group to the free amino group of methionyl-tRNA(fMet). The formyl group appears to play a dual role in the initiator identity of N-formylmethionyl-tRNA by promoting its recognition by IF2 and preventing the misappropriation of this tRNA by the elongation apparatus. The polypeptide is Methionyl-tRNA formyltransferase (Syntrophus aciditrophicus (strain SB)).